We begin with the raw amino-acid sequence, 428 residues long: Aerobic C4-dicarboxylate transport protein (428 aa).

9 helical membrane passes run 5-27 (LFKSLYFQVLTAIAIGILLGHYY), 47-64 (MIIAPVIFCTVVTGIAGM), 77-99 (ALLYFEIVSTIALINGLIIVNVV), 141-163 (VIGAFASGNILQVLLFAVLFGFA), 184-206 (VIFGIINMIMRLAPIGAFGAMAF), 216-238 (LVQLGQLIICFYITCILFVVVVL), 289-311 (VVGLVIPTGYSFNLDGTSIYLTM), 326-348 (IFHQITLLVVLLLSSKGAAGVTG), and 353-375 (VLAATISAVGHLPVAGLALILGI).

This sequence belongs to the dicarboxylate/amino acid:cation symporter (DAACS) (TC 2.A.23) family.

Its subcellular location is the cell inner membrane. Responsible for the transport of dicarboxylates such as succinate, fumarate, and malate from the periplasm across the membrane. The chain is Aerobic C4-dicarboxylate transport protein from Salmonella typhi.